The sequence spans 94 residues: Small nuclear ribonucleoprotein E (94 aa).

Positions 14 to 94 (INCIFNFLQQ…DNITLITSAD (81 aa)) constitute a Sm domain.

The protein belongs to the snRNP Sm proteins family. Component of the Sm core complex, present in spliceosomal snRNP U1, U2, U4/U6 and U5. The core complex contains SMB1, SMD1, SMD2, SMD3, SME1, SMX3 and SMX2 (Sm proteins B, D1, D2, D3, E, F and G, respectively), and is probably a heptameric ring structure. SME1 specifically interacts with SMX2 and SMX3. Component of the U4/U6-U5 tri-snRNP complex composed of the U4, U6 and U5 snRNAs and at least PRP3, PRP4, PRP6, PRP8, PRP18, PRP31, PRP38, SNU13, SNU23, SNU66, SNU114, SPP381, SMB1, SMD1, SMD2, SMD3, SMX2, SMX3, LSM2, LSM3, LSM4, LSM5, LSM6, LSM7, LSM8, BRR2 and DIB1.

The protein resides in the cytoplasm. The protein localises to the nucleus. Involved in pre-mRNA splicing. Binds and is required for the stability of snRNA U1, U2, U4 and U5 which contain a highly conserved structural motif called the Sm binding site. Involved in cap modification. This chain is Small nuclear ribonucleoprotein E (SME1), found in Saccharomyces cerevisiae (strain ATCC 204508 / S288c) (Baker's yeast).